Here is a 95-residue protein sequence, read N- to C-terminus: Protein TusB (95 aa).

It belongs to the DsrH/TusB family. Heterohexamer, formed by a dimer of trimers. The hexameric TusBCD complex contains 2 copies each of TusB, TusC and TusD. The TusBCD complex interacts with TusE.

It is found in the cytoplasm. Its function is as follows. Part of a sulfur-relay system required for 2-thiolation of 5-methylaminomethyl-2-thiouridine (mnm(5)s(2)U) at tRNA wobble positions. This chain is Protein TusB, found in Shigella sonnei (strain Ss046).